A 302-amino-acid chain; its full sequence is NAD kinase 1 (302 aa).

The Proton acceptor role is filled by aspartate 67. Residues 67–68 (DG), arginine 72, 148–149 (ND), lysine 178, and aspartate 180 contribute to the NAD(+) site.

The protein belongs to the NAD kinase family. Requires a divalent metal cation as cofactor.

Its subcellular location is the cytoplasm. The enzyme catalyses NAD(+) + ATP = ADP + NADP(+) + H(+). Functionally, involved in the regulation of the intracellular balance of NAD and NADP, and is a key enzyme in the biosynthesis of NADP. Catalyzes specifically the phosphorylation on 2'-hydroxyl of the adenosine moiety of NAD to yield NADP. This is NAD kinase 1 from Prochlorococcus marinus (strain NATL2A).